Reading from the N-terminus, the 284-residue chain is 2-dehydro-3-deoxyphosphooctonate aldolase (284 aa).

The protein belongs to the KdsA family.

The protein localises to the cytoplasm. The enzyme catalyses D-arabinose 5-phosphate + phosphoenolpyruvate + H2O = 3-deoxy-alpha-D-manno-2-octulosonate-8-phosphate + phosphate. It functions in the pathway carbohydrate biosynthesis; 3-deoxy-D-manno-octulosonate biosynthesis; 3-deoxy-D-manno-octulosonate from D-ribulose 5-phosphate: step 2/3. The protein operates within bacterial outer membrane biogenesis; lipopolysaccharide biosynthesis. In Glaesserella parasuis serovar 5 (strain SH0165) (Haemophilus parasuis), this protein is 2-dehydro-3-deoxyphosphooctonate aldolase.